The chain runs to 104 residues: Astakine (104 aa).

Positions 1–22 (MKMRGVSVGVLVVAMMSGLAMA) are cleaved as a signal peptide. Intrachain disulfides connect Cys-25–Cys-38, Cys-32–Cys-50, Cys-37–Cys-76, Cys-60–Cys-84, and Cys-78–Cys-91.

This sequence belongs to the AVIT (prokineticin) family.

The protein resides in the secreted. Functionally, cytokine directly involved in hematopoiesis. In Pacifastacus leniusculus (Signal crayfish), this protein is Astakine.